The primary structure comprises 626 residues: Lipoprotein LpqB (626 aa).

Residues 1–23 (MIGQANRIAAAVSTACLAVLLAG) form the signal peptide. The N-palmitoyl cysteine moiety is linked to residue Cys-24. Cys-24 is lipidated: S-diacylglycerol cysteine. The segment at 428–457 (EAEREEDLADDTEPGDTAVGSTERRETDRG) is disordered. Residues 430 to 441 (EREEDLADDTEP) show a composition bias toward acidic residues.

The protein belongs to the LpqB lipoprotein family.

Its subcellular location is the cell membrane. The polypeptide is Lipoprotein LpqB (Thermobifida fusca (strain YX)).